The sequence spans 156 residues: ATP synthase subunit b (156 aa).

A helical transmembrane segment spans residues 3–23; it reads ITLTIFAQALAFAGLIWIVAT.

The protein belongs to the ATPase B chain family. As to quaternary structure, F-type ATPases have 2 components, F(1) - the catalytic core - and F(0) - the membrane proton channel. F(1) has five subunits: alpha(3), beta(3), gamma(1), delta(1), epsilon(1). F(0) has three main subunits: a(1), b(2) and c(10-14). The alpha and beta chains form an alternating ring which encloses part of the gamma chain. F(1) is attached to F(0) by a central stalk formed by the gamma and epsilon chains, while a peripheral stalk is formed by the delta and b chains.

It localises to the cell inner membrane. Its function is as follows. F(1)F(0) ATP synthase produces ATP from ADP in the presence of a proton or sodium gradient. F-type ATPases consist of two structural domains, F(1) containing the extramembraneous catalytic core and F(0) containing the membrane proton channel, linked together by a central stalk and a peripheral stalk. During catalysis, ATP synthesis in the catalytic domain of F(1) is coupled via a rotary mechanism of the central stalk subunits to proton translocation. In terms of biological role, component of the F(0) channel, it forms part of the peripheral stalk, linking F(1) to F(0). The protein is ATP synthase subunit b of Xanthomonas axonopodis pv. citri (strain 306).